The primary structure comprises 1193 residues: DNA-directed RNA polymerase subunit beta (1193 aa).

Positions 1153–1162 (EMRDLEDDED) are enriched in acidic residues. Residues 1153 to 1193 (EMRDLEDDEDAKQNEGLSLPNDEESEELVSADAERDVVTKE) are disordered. Over residues 1184-1193 (DAERDVVTKE) the composition is skewed to basic and acidic residues.

This sequence belongs to the RNA polymerase beta chain family. The RNAP catalytic core consists of 2 alpha, 1 beta, 1 beta' and 1 omega subunit. When a sigma factor is associated with the core the holoenzyme is formed, which can initiate transcription.

It carries out the reaction RNA(n) + a ribonucleoside 5'-triphosphate = RNA(n+1) + diphosphate. Functionally, DNA-dependent RNA polymerase catalyzes the transcription of DNA into RNA using the four ribonucleoside triphosphates as substrates. The protein is DNA-directed RNA polymerase subunit beta of Bacillus licheniformis (strain ATCC 14580 / DSM 13 / JCM 2505 / CCUG 7422 / NBRC 12200 / NCIMB 9375 / NCTC 10341 / NRRL NRS-1264 / Gibson 46).